Consider the following 506-residue polypeptide: Histidine ammonia-lyase (506 aa).

A cross-link (5-imidazolinone (Ala-Gly)) is located at residues Ala-143–Gly-145. Ser-144 carries the post-translational modification 2,3-didehydroalanine (Ser).

The protein belongs to the PAL/histidase family. Contains an active site 4-methylidene-imidazol-5-one (MIO), which is formed autocatalytically by cyclization and dehydration of residues Ala-Ser-Gly.

The protein localises to the cytoplasm. It catalyses the reaction L-histidine = trans-urocanate + NH4(+). The protein operates within amino-acid degradation; L-histidine degradation into L-glutamate; N-formimidoyl-L-glutamate from L-histidine: step 1/3. In Salmonella paratyphi A (strain ATCC 9150 / SARB42), this protein is Histidine ammonia-lyase.